The primary structure comprises 209 residues: Small ribosomal subunit protein uS4 (209 aa).

An S4 RNA-binding domain is found at 99-160; sequence ARLDSVAYRM…RARASLRCKA (62 aa).

Belongs to the universal ribosomal protein uS4 family. In terms of assembly, part of the 30S ribosomal subunit. Contacts protein S5. The interaction surface between S4 and S5 is involved in control of translational fidelity.

In terms of biological role, one of the primary rRNA binding proteins, it binds directly to 16S rRNA where it nucleates assembly of the body of the 30S subunit. Its function is as follows. With S5 and S12 plays an important role in translational accuracy. The chain is Small ribosomal subunit protein uS4 from Dechloromonas aromatica (strain RCB).